The chain runs to 148 residues: MKVILKEDVKGLGKKESLVEVSDGYARNFLIPKGLAVEATAANINIMQTKKEAEKNRKERELAQAKELAEKLKGIVVTLKAKAGENGKLFGSMTSKDVSDYLKKQHNLDIDKKKISLPESMKSLGTYEAEVKLYPGVSAKLTVKIEQE.

This sequence belongs to the bacterial ribosomal protein bL9 family.

Binds to the 23S rRNA. In Acetivibrio thermocellus (strain ATCC 27405 / DSM 1237 / JCM 9322 / NBRC 103400 / NCIMB 10682 / NRRL B-4536 / VPI 7372) (Clostridium thermocellum), this protein is Large ribosomal subunit protein bL9.